We begin with the raw amino-acid sequence, 251 residues long: Small ribosomal subunit protein uS2 (251 aa).

The interval 232 to 251 (LQTGEEEMAAAEGESEQVEA) is disordered. Acidic residues predominate over residues 235-251 (GEEEMAAAEGESEQVEA).

It belongs to the universal ribosomal protein uS2 family.

This chain is Small ribosomal subunit protein uS2, found in Geobacter metallireducens (strain ATCC 53774 / DSM 7210 / GS-15).